A 432-amino-acid polypeptide reads, in one-letter code: 3-phosphoshikimate 1-carboxyvinyltransferase (432 aa).

3-phosphoshikimate contacts are provided by lysine 22, serine 23, and arginine 27. Lysine 22 is a phosphoenolpyruvate binding site. Residues glycine 96 and arginine 127 each contribute to the phosphoenolpyruvate site. 3-phosphoshikimate contacts are provided by serine 173, serine 174, glutamine 175, serine 201, aspartate 316, asparagine 339, and lysine 343. A phosphoenolpyruvate-binding site is contributed by glutamine 175. Residue aspartate 316 is the Proton acceptor of the active site. Phosphoenolpyruvate-binding residues include arginine 347, arginine 391, and lysine 416.

Belongs to the EPSP synthase family. As to quaternary structure, monomer.

It localises to the cytoplasm. It carries out the reaction 3-phosphoshikimate + phosphoenolpyruvate = 5-O-(1-carboxyvinyl)-3-phosphoshikimate + phosphate. It participates in metabolic intermediate biosynthesis; chorismate biosynthesis; chorismate from D-erythrose 4-phosphate and phosphoenolpyruvate: step 6/7. Functionally, catalyzes the transfer of the enolpyruvyl moiety of phosphoenolpyruvate (PEP) to the 5-hydroxyl of shikimate-3-phosphate (S3P) to produce enolpyruvyl shikimate-3-phosphate and inorganic phosphate. This is 3-phosphoshikimate 1-carboxyvinyltransferase from Haemophilus influenzae (strain 86-028NP).